The sequence spans 306 residues: Aspartate carbamoyltransferase catalytic subunit (306 aa).

Positions 55 and 56 each coordinate carbamoyl phosphate. Position 84 (Lys-84) interacts with L-aspartate. Carbamoyl phosphate is bound by residues Arg-105, His-133, and Gln-136. L-aspartate-binding residues include Arg-166 and Arg-227. Positions 265 and 266 each coordinate carbamoyl phosphate.

It belongs to the aspartate/ornithine carbamoyltransferase superfamily. ATCase family. In terms of assembly, heterododecamer (2C3:3R2) of six catalytic PyrB chains organized as two trimers (C3), and six regulatory PyrI chains organized as three dimers (R2).

It carries out the reaction carbamoyl phosphate + L-aspartate = N-carbamoyl-L-aspartate + phosphate + H(+). It functions in the pathway pyrimidine metabolism; UMP biosynthesis via de novo pathway; (S)-dihydroorotate from bicarbonate: step 2/3. In terms of biological role, catalyzes the condensation of carbamoyl phosphate and aspartate to form carbamoyl aspartate and inorganic phosphate, the committed step in the de novo pyrimidine nucleotide biosynthesis pathway. The protein is Aspartate carbamoyltransferase catalytic subunit of Neisseria meningitidis serogroup C / serotype 2a (strain ATCC 700532 / DSM 15464 / FAM18).